The primary structure comprises 138 residues: Acidic phospholipase A2 1 (138 aa).

A signal peptide spans 1 to 16 (MRTLWIVAVWLMGVEG). Intrachain disulfides connect C42–C131, C44–C60, C59–C111, C65–C138, C66–C104, C73–C97, and C91–C102. Ca(2+) is bound by residues Y43, G45, and G47. The active site involves H63. D64 lines the Ca(2+) pocket. D105 is an active-site residue.

Monomer. It depends on Ca(2+) as a cofactor. Expressed by the venom gland.

Its subcellular location is the secreted. It carries out the reaction a 1,2-diacyl-sn-glycero-3-phosphocholine + H2O = a 1-acyl-sn-glycero-3-phosphocholine + a fatty acid + H(+). Snake venom phospholipase that inhibits ADP- and collagen-induced human platelet aggregation. This inhibition is completely inhibited by abolition of catalytic activity in case of collagen as inducer and partially inhibited in case of ADP as inducer. PLA2 catalyzes the calcium-dependent hydrolysis of the 2-acyl groups in 3-sn-phosphoglycerides. The sequence is that of Acidic phospholipase A2 1 from Macrovipera lebetinus (Levantine viper).